The primary structure comprises 117 residues: UPF0102 protein YPN_3432 (117 aa).

This sequence belongs to the UPF0102 family.

In Yersinia pestis bv. Antiqua (strain Nepal516), this protein is UPF0102 protein YPN_3432.